Here is a 477-residue protein sequence, read N- to C-terminus: Trigger factor (477 aa).

The region spanning 169 to 254 is the PPIase FKBP-type domain; it reads EDRVTIDYLG…VKEVAKPNEL (86 aa). Positions 435-477 are disordered; that stretch reads VSKEELTAEDEDAASEAKPAKKAAPKKKAAPKKKADEGKSEEA. A compositionally biased stretch (basic residues) spans 454 to 466; it reads AKKAAPKKKAAPK. A compositionally biased stretch (basic and acidic residues) spans 467 to 477; sequence KKADEGKSEEA.

The protein belongs to the FKBP-type PPIase family. Tig subfamily.

The protein localises to the cytoplasm. The enzyme catalyses [protein]-peptidylproline (omega=180) = [protein]-peptidylproline (omega=0). In terms of biological role, involved in protein export. Acts as a chaperone by maintaining the newly synthesized protein in an open conformation. Functions as a peptidyl-prolyl cis-trans isomerase. The protein is Trigger factor of Brucella anthropi (strain ATCC 49188 / DSM 6882 / CCUG 24695 / JCM 21032 / LMG 3331 / NBRC 15819 / NCTC 12168 / Alc 37) (Ochrobactrum anthropi).